The chain runs to 394 residues: NAD(P)H-quinone oxidoreductase subunit H 2 (394 aa).

It belongs to the complex I 49 kDa subunit family. As to quaternary structure, NDH-1 can be composed of about 15 different subunits; different subcomplexes with different compositions have been identified which probably have different functions.

The protein localises to the cell inner membrane. It carries out the reaction a plastoquinone + NADH + (n+1) H(+)(in) = a plastoquinol + NAD(+) + n H(+)(out). It catalyses the reaction a plastoquinone + NADPH + (n+1) H(+)(in) = a plastoquinol + NADP(+) + n H(+)(out). NDH-1 shuttles electrons from an unknown electron donor, via FMN and iron-sulfur (Fe-S) centers, to quinones in the respiratory and/or the photosynthetic chain. The immediate electron acceptor for the enzyme in this species is believed to be plastoquinone. Couples the redox reaction to proton translocation, and thus conserves the redox energy in a proton gradient. Cyanobacterial NDH-1 also plays a role in inorganic carbon-concentration. The sequence is that of NAD(P)H-quinone oxidoreductase subunit H 2 from Gloeobacter violaceus (strain ATCC 29082 / PCC 7421).